The chain runs to 185 residues: Ribosome-recycling factor (185 aa).

Belongs to the RRF family.

It localises to the cytoplasm. Responsible for the release of ribosomes from messenger RNA at the termination of protein biosynthesis. May increase the efficiency of translation by recycling ribosomes from one round of translation to another. The sequence is that of Ribosome-recycling factor from Clostridium novyi (strain NT).